The following is a 448-amino-acid chain: Beclin-1 (448 aa).

N-acetylmethionine is present on Met-1. Phosphoserine is present on residues Ser-14 and Ser-29. Residues 47-66 form a disordered region; it reads TTAQAKPGETQEEEANSGEE. Phosphoserine; by AMPK occurs at positions 88, 91, and 94. The BH3 signature appears at 106–125; sequence TMENLSRRLKVTGDLFDIMS. Residues 110–157 form an interaction with BCL2 and BCL2L1 isoform Bcl-X(L) region; the sequence is LSRRLKVTGDLFDIMSGQTDVDHPLCEECTDTLLDQLDTQLNVTENEC. Thr-117 carries the phosphothreonine; by DAPK1 modification. Positions 140-268 form a coiled coil; it reads DTLLDQLDTQ…LDKLKKTNVF (129 aa). Residues 243-448 are evolutionary conserved domain (ECD); sequence DELKSVENQV…AWVSSQFYNK (206 aa). Residues Lys-400 and Lys-435 each participate in a glycyl lysine isopeptide (Lys-Gly) (interchain with G-Cter in ubiquitin) cross-link. Residues 423–448 are required for membrane-association; it reads WTKALKFMLTNLKWGLAWVSSQFYNK.

The protein belongs to the beclin family. As to quaternary structure, a homodimeric form is proposed to exist; this metastable form readily transits to ATG14- or UVRAG-containing complexes with BECN1:UVRAG being more stable than BECN1:ATG14. Component of the PI3K (PI3KC3/PI3K-III/class III phosphatidylinositol 3-kinase) complex whose core is composed of the catalytic subunit PIK3C3, the regulatory subunit PIK3R4 and BECN1, and associates with additional regulatory/auxiliary subunits to form alternative complex forms. Accepted alternative complex forms containing a fourth regulatory subunit in a mutually exclusive manner are PI3K complex I (PI3KC3-C1) containing ATG14, and PI3K complex II (PI3KC3-C2) containing UVRAG. PI3KC3-C1 displays a V-shaped architecture with PIK3R4 serving as a bridge between PIK3C3 and the ATG14:BECN1 subcomplex. Both, PI3KC3-C1 and PI3KC3-C2, can associate with further regulatory subunits, such as RUBCN, SH3GLB1/Bif-1 and AMBRA1. PI3KC3-C1 probably associates with PIK3CB. Forms a complex with PPP2CA and AMBRA1; AMBRA1 and BECN1 components of the complex regulate MYC stability via different pathways. Component of the complex, at least composed of LRPPRC, BECN1 and BCL2; the interactions prevent BECN1 from forming an autophagy-inducing complex with PIK3C3. Interacts with AMBRA1, GOPC, GRID2 and PIK3CB. Interacts with BCL2 and BCL2L1 isoform Bcl-X(L); the interaction inhibits BECN1 function in promoting autophagy by interfering with the formation of the PI3K complex. Interacts with cytosolic HMGB1; inhibits the interaction of BECN1 and BCL2 leading to promotion of autophagy. Interacts with USP10, USP13, VMP1, DAPK1. Interacts with the poly-Gln domain of ATXN3; the interaction causes deubiquitination at Lys-400 and stabilizes BECN1. Interacts with SLAMF1. Interacts with TRIM5; the interaction causes activation of BECN1 by causing its dissociation from its inhibitors BCL2 and TAB2. Interacts with active ULK1 (phosphorylated on 'Ser-317') and MEFV simultaneously. Interacts with TRIM50. Interacts with TRIM16. Interacts with WDR81 and WDR91; negatively regulates the PI3 kinase/PI3K activity associated with endosomal membranes. Interacts with LAPTM4B; competes with EGFR for LAPTM4B binding; regulates EGFR activity. Interacts with ATG14; this interaction is increased in the absence of TMEM39A. Interacts with WASHC1; preventing interaction with AMBRA1 and the DCX(AMBRA1) complex and subsequent ubiquitination. Interacts with TRIM17. Interacts with BCL2L10/BCL-B (via BH1 domain). Interacts with SH3BGRL. Interacts with Irgm1; enhancing BECN1-interacting partners and influencing the composition of the BECN1 complex. Interacts with ARMC3. Interacts with LRPPRC. (Microbial infection) Interacts with murine gammaherpesvirus 68 M11; the viral protein binds BECN1 with higher affinity than cellular BCL2. Phosphorylation at Thr-117 by DAPK1 reduces its interaction with BCL2 and BCL2L1 and promotes induction of autophagy. In response to autophagic stimuli, phosphorylated at serine residues by AMPK in an ATG14-dependent manner, and this phosphorylation is critical for maximally efficient autophagy. In terms of processing, polyubiquitinated by NEDD4, both with 'Lys-11'- and 'Lys-63'-linkages. 'Lys-11'-linked polyubiquitination leads to degradation and is enhanced when the stabilizing interaction partner VPS34 is depleted. Deubiquitinated by USP10 and USP13, leading to stabilize the PIK3C3/VPS34-containing complexes. Polyubiquitinated at Lys-400 with 'Lys-48'-linkages. 'Lys-48'-linked poyubiquitination of Lys-400 leads to degradation. Deubiquitinated by ATXN3, leading to stabilization. Ubiquitinated at Lys-435 via 'Lys-63'-linkage by the DCX(AMBRA1) complex, thereby increasing the association between BECN1 and PIK3C3 to promote PIK3C3 activity. 'Lys-48'-linked ubiquitination by RNF216 leads to proteasomal degradation and autophagy inhibition. Post-translationally, proteolytically processed by caspases including CASP8 and CASP3; the C-terminal fragments lack autophagy-inducing capacity and are proposed to induce apoptosis. Thus the cleavage is proposed to be an determinant to switch from autophagy to apoptosis pathways affecting cellular homeostasis including viral infections and survival of tumor cells.

It localises to the cytoplasm. It is found in the golgi apparatus. The protein localises to the trans-Golgi network membrane. Its subcellular location is the endosome membrane. The protein resides in the endoplasmic reticulum membrane. It localises to the mitochondrion membrane. It is found in the endosome. The protein localises to the cytoplasmic vesicle. Its subcellular location is the autophagosome. The protein resides in the mitochondrion. It localises to the nucleus. Its function is as follows. Plays a central role in autophagy. Acts as a core subunit of different PI3K complex forms that mediate formation of phosphatidylinositol 3-phosphate and are believed to play a role in multiple membrane trafficking pathways: PI3KC3-C1 is involved in initiation of autophagosomes and PI3KC3-C2 in maturation of autophagosomes and endocytosis. Involved in regulation of degradative endocytic trafficking and required for the abscission step in cytokinesis, probably in the context of PI3KC3-C2. Essential for the formation of PI3KC3-C2 but not PI3KC3-C1 PI3K complex forms. Involved in endocytosis including endosome formation in neuronal cells. May play a role in antiviral host defense. Beclin-1-C 35 kDa localized to mitochondria can promote apoptosis; it induces the mitochondrial translocation of BAX and the release of proapoptotic factors. This chain is Beclin-1 (Becn1), found in Mus musculus (Mouse).